The sequence spans 129 residues: Large ribosomal subunit protein bL17 (129 aa).

This sequence belongs to the bacterial ribosomal protein bL17 family. Part of the 50S ribosomal subunit. Contacts protein L32.

The protein is Large ribosomal subunit protein bL17 of Yersinia enterocolitica serotype O:8 / biotype 1B (strain NCTC 13174 / 8081).